We begin with the raw amino-acid sequence, 403 residues long: MQRAVSVVARLGFRLQAFPPALCRPLSCAQEVLRRTPLYDFHLAHGGKMVAFAGWSLPVQYRDSHTDSHLHTRQHCSLFDVSHMLQTKILGSDRVKLMESLVVGDIAELRPNQGTLSLFTNEAGGILDDLIVTNTSEGHLYVVSNAGCWEKDLALMQDKVRELQNQGRDVGLEVLDNALLALQGPTAAQVLQAGVADDLRKLPFMTSAVMEVFGVSGCRVTRCGYTGEDGVEISVPVAGAVHLATAILKNPEVKLAGLAARDSLRLEAGLCLYGNDIDEHTTPVEGSLSWTLGKRRRAAMDFPGAKVIVPQLKGRVQRRRVGLMCEGAPMRAHSPILNMEGTKIGTVTSGCPSPSLKKNVAMGYVPCEYSRPGTMLLVEVRRKQQMAVVSKMPFVPTNYYTLK.

Residues Met-1 to Cys-28 constitute a mitochondrion transit peptide. The substrate site is built by Glu-232, Arg-261, and Tyr-399.

Belongs to the GcvT family. In terms of assembly, the glycine cleavage system is composed of four proteins: P, T, L and H.

Its subcellular location is the mitochondrion. It catalyses the reaction N(6)-[(R)-S(8)-aminomethyldihydrolipoyl]-L-lysyl-[protein] + (6S)-5,6,7,8-tetrahydrofolate = N(6)-[(R)-dihydrolipoyl]-L-lysyl-[protein] + (6R)-5,10-methylene-5,6,7,8-tetrahydrofolate + NH4(+). Functionally, the glycine cleavage system catalyzes the degradation of glycine. The chain is Aminomethyltransferase, mitochondrial from Homo sapiens (Human).